Consider the following 238-residue polypeptide: Transmembrane protein 127 (238 aa).

M1 carries the N-acetylmethionine modification. Residues 1-11 (MYAPGGAGLPG) are compositionally biased toward gly residues. The tract at residues 1-27 (MYAPGGAGLPGGRRRRSPGGSALPKQP) is disordered. Residue S17 is modified to Phosphoserine. 3 helical membrane-spanning segments follow: residues 96–116 (IAAF…LDVF), 130–150 (AFAH…SYWA), and 169–189 (VYVT…ASIL).

This sequence belongs to the TMEM127 family. In terms of tissue distribution, widely expressed.

The protein localises to the cell membrane. Its subcellular location is the cytoplasm. Functionally, controls cell proliferation acting as a negative regulator of TOR signaling pathway mediated by mTORC1. May act as a tumor suppressor. The protein is Transmembrane protein 127 (TMEM127) of Homo sapiens (Human).